A 209-amino-acid polypeptide reads, in one-letter code: Molybdenum cofactor guanylyltransferase (209 aa).

GTP-binding positions include 16-18 (LAG), K28, N56, D69, and D103. D103 contacts Mg(2+).

Belongs to the MobA family. As to quaternary structure, monomer. Requires Mg(2+) as cofactor.

Its subcellular location is the cytoplasm. It catalyses the reaction Mo-molybdopterin + GTP + H(+) = Mo-molybdopterin guanine dinucleotide + diphosphate. In terms of biological role, transfers a GMP moiety from GTP to Mo-molybdopterin (Mo-MPT) cofactor (Moco or molybdenum cofactor) to form Mo-molybdopterin guanine dinucleotide (Mo-MGD) cofactor. The sequence is that of Molybdenum cofactor guanylyltransferase from Rhizobium leguminosarum bv. trifolii (strain WSM2304).